Here is a 225-residue protein sequence, read N- to C-terminus: 7-cyano-7-deazaguanine synthase (225 aa).

V8–L18 lines the ATP pocket. Positions 188, 198, 201, and 204 each coordinate Zn(2+).

This sequence belongs to the QueC family. Requires Zn(2+) as cofactor.

The catalysed reaction is 7-carboxy-7-deazaguanine + NH4(+) + ATP = 7-cyano-7-deazaguanine + ADP + phosphate + H2O + H(+). The protein operates within purine metabolism; 7-cyano-7-deazaguanine biosynthesis. Catalyzes the ATP-dependent conversion of 7-carboxy-7-deazaguanine (CDG) to 7-cyano-7-deazaguanine (preQ(0)). This chain is 7-cyano-7-deazaguanine synthase, found in Rickettsia bellii (strain OSU 85-389).